An 87-amino-acid chain; its full sequence is Large ribosomal subunit protein bL31B (87 aa).

The protein belongs to the bacterial ribosomal protein bL31 family. Type B subfamily. Part of the 50S ribosomal subunit.

In Latilactobacillus sakei subsp. sakei (strain 23K) (Lactobacillus sakei subsp. sakei), this protein is Large ribosomal subunit protein bL31B.